A 555-amino-acid polypeptide reads, in one-letter code: Oxygen-dependent choline dehydrogenase (555 aa).

4–33 (DYIIIGAGSAGNVLATRLTEDADVSVLLLE) is a binding site for FAD. Residues 180 to 202 (QQEGFGPMDRTVTPKGRRASTAR) form a disordered region. H473 acts as the Proton acceptor in catalysis.

Belongs to the GMC oxidoreductase family. Requires FAD as cofactor.

It carries out the reaction choline + A = betaine aldehyde + AH2. The enzyme catalyses betaine aldehyde + NAD(+) + H2O = glycine betaine + NADH + 2 H(+). It participates in amine and polyamine biosynthesis; betaine biosynthesis via choline pathway; betaine aldehyde from choline (cytochrome c reductase route): step 1/1. Its function is as follows. Involved in the biosynthesis of the osmoprotectant glycine betaine. Catalyzes the oxidation of choline to betaine aldehyde and betaine aldehyde to glycine betaine at the same rate. The protein is Oxygen-dependent choline dehydrogenase of Serratia proteamaculans (strain 568).